A 600-amino-acid polypeptide reads, in one-letter code: 1-deoxy-D-xylulose-5-phosphate synthase (600 aa).

Residues His57 and 98–100 (GHA) each bind thiamine diphosphate. Residue Asp125 participates in Mg(2+) binding. Thiamine diphosphate-binding positions include 126–127 (AS), Asn155, Tyr264, and Glu343. Asn155 contributes to the Mg(2+) binding site.

The protein belongs to the transketolase family. DXPS subfamily. In terms of assembly, homodimer. The cofactor is Mg(2+). Thiamine diphosphate is required as a cofactor.

The catalysed reaction is D-glyceraldehyde 3-phosphate + pyruvate + H(+) = 1-deoxy-D-xylulose 5-phosphate + CO2. Its pathway is metabolic intermediate biosynthesis; 1-deoxy-D-xylulose 5-phosphate biosynthesis; 1-deoxy-D-xylulose 5-phosphate from D-glyceraldehyde 3-phosphate and pyruvate: step 1/1. Its function is as follows. Catalyzes the acyloin condensation reaction between C atoms 2 and 3 of pyruvate and glyceraldehyde 3-phosphate to yield 1-deoxy-D-xylulose-5-phosphate (DXP). This Fusobacterium nucleatum subsp. nucleatum (strain ATCC 25586 / DSM 15643 / BCRC 10681 / CIP 101130 / JCM 8532 / KCTC 2640 / LMG 13131 / VPI 4355) protein is 1-deoxy-D-xylulose-5-phosphate synthase.